The primary structure comprises 306 residues: D-alanine--D-alanine ligase (306 aa).

The region spanning 106–301 (KLLWQSAGIN…FEELVLKILG (196 aa)) is the ATP-grasp domain. ATP is bound at residue 132–187 (AKELGLPLIVKPSREGSTIGLSKVREAGEVAAAWHLAARHDAMVLAEQFIEGTELT). Mg(2+) contacts are provided by D255, E268, and N270.

It belongs to the D-alanine--D-alanine ligase family. Mg(2+) serves as cofactor. It depends on Mn(2+) as a cofactor.

The protein localises to the cytoplasm. The enzyme catalyses 2 D-alanine + ATP = D-alanyl-D-alanine + ADP + phosphate + H(+). It participates in cell wall biogenesis; peptidoglycan biosynthesis. Its function is as follows. Cell wall formation. The polypeptide is D-alanine--D-alanine ligase (Nitrosospira multiformis (strain ATCC 25196 / NCIMB 11849 / C 71)).